The sequence spans 317 residues: MDRLDLIKRNVQEIVTEGELEELLNKKKAPRAYVGYEPSGKIHMGHVLTVNKLIDLQKAGFEITVLLADVHAYLNRKGTLEEVRKIADYNKRCFIALGLDKEKTNFVYGSDYQLGAEYMLNVLKLSRSVTLNRARRSMDEVGRAMDDPTVSQMVYPLMQAIDIAMLGVDIAVGGIDQRKIHMLARENLKNLGFETPICIHTPILLGLDGTKMASSKENFISVDDTEEEIYRKLKKAYCKIGDTEENPILALFRYHIFPRYETIVIERPEKFGGNITYTSYEEMENAFVAESVHPMDLKNSAAKYINEILDPVRKVLL.

An L-tyrosine-binding site is contributed by Tyr-33. The 'HIGH' region signature appears at Pro-38–His-46. 4 residues coordinate L-tyrosine: Tyr-155, Gln-159, Asp-162, and Gln-177. The short motif at Lys-211–Ser-215 is the 'KMSKS' region element. Position 214 (Ser-214) interacts with ATP.

The protein belongs to the class-I aminoacyl-tRNA synthetase family. TyrS type 3 subfamily. In terms of assembly, homodimer.

It localises to the cytoplasm. It carries out the reaction tRNA(Tyr) + L-tyrosine + ATP = L-tyrosyl-tRNA(Tyr) + AMP + diphosphate + H(+). Functionally, catalyzes the attachment of tyrosine to tRNA(Tyr) in a two-step reaction: tyrosine is first activated by ATP to form Tyr-AMP and then transferred to the acceptor end of tRNA(Tyr). This Methanosarcina barkeri (strain Fusaro / DSM 804) protein is Tyrosine--tRNA ligase.